The following is a 379-amino-acid chain: Alcohol dehydrogenase 3 (379 aa).

Positions 47, 49, 69, 99, 102, 105, 113, and 177 each coordinate Zn(2+). An alcohol is bound by residues Thr-49 and His-69. Residue Thr-49 coordinates NAD(+). NAD(+) is bound by residues 202 to 207 (GLGAVG), Asp-226, Lys-231, Thr-272, Val-295, 295 to 297 (VGV), Phe-322, and Arg-372.

The protein belongs to the zinc-containing alcohol dehydrogenase family. In terms of assembly, homodimer. Requires Zn(2+) as cofactor.

Its subcellular location is the cytoplasm. It carries out the reaction a primary alcohol + NAD(+) = an aldehyde + NADH + H(+). The catalysed reaction is a secondary alcohol + NAD(+) = a ketone + NADH + H(+). The polypeptide is Alcohol dehydrogenase 3 (ADH3) (Hordeum vulgare (Barley)).